The following is a 303-amino-acid chain: Protoporphyrin uptake protein 1 (303 aa).

The Extracellular portion of the chain corresponds to 1-18 (MSTTDSGFVLYHYTPSKA). A helical membrane pass occupies residues 19–39 (AAIVFVVLFIIMTVIFAVQTL). Residues 40–76 (YAARKSSKALKNNPFESSDDKVDSLEDAEYKQLKITP) are Cytoplasmic-facing. Residues 77 to 97 (TVFAFIPFFTGCIMEAVGYIG) form a helical membrane-spanning segment. The Extracellular segment spans residues 98-111 (RALSSSNPERTTPY). A helical membrane pass occupies residues 112–132 (IIQSVLLLVAPALIAATIYMI). The Cytoplasmic portion of the chain corresponds to 133–154 (FGRLLHVMRCQSLILISARFGT). Residues 155–175 (TFFVVGDVFSFFLQAAGGGLM) traverse the membrane as a helical segment. Residues 176-183 (SKAGSTKT) are Extracellular-facing. Residues 184–204 (GSGLITAGLFVQVIFFGFFII) form a helical membrane-spanning segment. Residues 205–226 (NEIRFTVNVKRRCLFYEDISRK) are Cytoplasmic-facing. A helical membrane pass occupies residues 227 to 247 (WIFVNATLLLSSMLILLRSIV). Residues 248 to 264 (RIVEFIQGFNGYIISHE) lie on the Extracellular side of the membrane. The helical transmembrane segment at 265–285 (YFIYVFDAVPMLLVIIAFSVG) threads the bilayer. The Cytoplasmic segment spans residues 286–303 (SFFGNVFDVIKECQTLSN).

It belongs to the lipid-translocating exporter (LTE) (TC 9.A.26.1) family. N-glycosylated.

The protein resides in the cell membrane. Its function is as follows. Involved in inducible protoporphyrin IX influx and heme efflux. This Saccharomyces cerevisiae (strain ATCC 204508 / S288c) (Baker's yeast) protein is Protoporphyrin uptake protein 1 (PUG1).